A 367-amino-acid chain; its full sequence is Putative F-box protein At3g21130 (367 aa).

One can recognise an F-box domain in the interval 4 to 50 (KRNTVYLSEDLIVEILSRVSAVSLARLRTTSKRWNALVKDERLAKKH).

This is Putative F-box protein At3g21130 from Arabidopsis thaliana (Mouse-ear cress).